A 179-amino-acid chain; its full sequence is Lipoprotein signal peptidase (179 aa).

A run of 4 helical transmembrane segments spans residues 10 to 30 (LFQF…AIII), 48 to 68 (VPVL…AFSF), 75 to 95 (WQHY…IFWL), and 101 to 121 (NAMI…GNLI). Residues aspartate 131 and aspartate 149 contribute to the active site. A helical membrane pass occupies residues 141–161 (HFPAFNIADSAITIGTILLLI).

The protein belongs to the peptidase A8 family.

Its subcellular location is the cell inner membrane. The catalysed reaction is Release of signal peptides from bacterial membrane prolipoproteins. Hydrolyzes -Xaa-Yaa-Zaa-|-(S,diacylglyceryl)Cys-, in which Xaa is hydrophobic (preferably Leu), and Yaa (Ala or Ser) and Zaa (Gly or Ala) have small, neutral side chains.. It functions in the pathway protein modification; lipoprotein biosynthesis (signal peptide cleavage). Functionally, this protein specifically catalyzes the removal of signal peptides from prolipoproteins. The protein is Lipoprotein signal peptidase of Acinetobacter baylyi (strain ATCC 33305 / BD413 / ADP1).